The chain runs to 421 residues: 5-methylthioadenosine/S-adenosylhomocysteine deaminase (421 aa).

2 residues coordinate Zn(2+): His60 and His62. Residues Glu89 and His181 each contribute to the substrate site. Residue His208 participates in Zn(2+) binding. The substrate site is built by Glu211 and Asp296. Asp296 is a Zn(2+) binding site.

It belongs to the metallo-dependent hydrolases superfamily. MTA/SAH deaminase family. Zn(2+) is required as a cofactor.

The catalysed reaction is S-adenosyl-L-homocysteine + H2O + H(+) = S-inosyl-L-homocysteine + NH4(+). It catalyses the reaction S-methyl-5'-thioadenosine + H2O + H(+) = S-methyl-5'-thioinosine + NH4(+). Catalyzes the deamination of 5-methylthioadenosine and S-adenosyl-L-homocysteine into 5-methylthioinosine and S-inosyl-L-homocysteine, respectively. Is also able to deaminate adenosine. This chain is 5-methylthioadenosine/S-adenosylhomocysteine deaminase, found in Pyrococcus horikoshii (strain ATCC 700860 / DSM 12428 / JCM 9974 / NBRC 100139 / OT-3).